Reading from the N-terminus, the 118-residue chain is Large ribosomal subunit protein uL22c (118 aa).

The protein belongs to the universal ribosomal protein uL22 family. As to quaternary structure, part of the 50S ribosomal subunit.

The protein resides in the plastid. It is found in the chloroplast. Functionally, this protein binds specifically to 23S rRNA. Its function is as follows. The globular domain of the protein is located near the polypeptide exit tunnel on the outside of the subunit, while an extended beta-hairpin is found that lines the wall of the exit tunnel in the center of the 70S ribosome. This chain is Large ribosomal subunit protein uL22c (rpl22), found in Physcomitrium patens (Spreading-leaved earth moss).